A 1203-amino-acid polypeptide reads, in one-letter code: Rho GTPase-activating protein gacGG (1203 aa).

RCC1 repeat units lie at residues 52–104 (TGEL…AIME), 106–148 (GLLY…VVAD), 155–204 (KRSV…AIVE), 206–255 (NEVF…ARSG), 257–298 (GNVC…VLSE), 299–359 (KGEI…EGRN), and 361–410 (LSVY…YLRG). The disordered stretch occupies residues 316–343 (KLDVNSSPNINSSSGTTTPTTNTTTTTK). The span at 320-343 (NSSPNINSSSGTTTPTTNTTTTTK) shows a compositional bias: low complexity. One can recognise a Rho-GAP domain in the interval 381-594 (VDIAESMRRK…TIMKQYPLME (214 aa)). Residues 649 to 679 (TLEIKNNQNNQNNQKENNNNNNNINNSNNNN) adopt a coiled-coil conformation. Disordered stretches follow at residues 657–725 (NNQN…TGNI), 746–789 (KDGN…NLSP), and 831–852 (FANSGSSSNNNNSNNSPSLIGS). 2 stretches are compositionally biased toward low complexity: residues 746-788 (KDGN…PNLS) and 833-852 (NSGSSSNNNNSNNSPSLIGS). The stretch at 995–1078 (FDLLEKSMTE…ISNQNLSRVN (84 aa)) forms a coiled coil.

Its subcellular location is the cytoplasm. Rho GTPase-activating protein involved in the signal transduction pathway. The protein is Rho GTPase-activating protein gacGG (gacGG) of Dictyostelium discoideum (Social amoeba).